The chain runs to 334 residues: D-fructose 1,6-bisphosphatase class 2/sedoheptulose 1,7-bisphosphatase (334 aa).

Residues Asp-33, Glu-57, Asp-85, and Glu-88 each contribute to the Mn(2+) site. Substrate-binding positions include 88-90, Tyr-119, 164-166, and 186-188; these read EGT, RAR, and DGD. A Mn(2+)-binding site is contributed by Glu-213.

Belongs to the FBPase class 2 family. As to quaternary structure, homotetramer. It depends on Mn(2+) as a cofactor.

The catalysed reaction is beta-D-fructose 1,6-bisphosphate + H2O = beta-D-fructose 6-phosphate + phosphate. It catalyses the reaction D-sedoheptulose 1,7-bisphosphate + H2O = D-sedoheptulose 7-phosphate + phosphate. The protein operates within carbohydrate biosynthesis; Calvin cycle. In terms of biological role, catalyzes the hydrolysis of fructose 1,6-bisphosphate (Fru 1,6-P2) and sedoheptulose 1,7-bisphosphate (Sed 1,7-P2) to fructose 6-phosphate and sedoheptulose 7-phosphate, respectively. The sequence is that of D-fructose 1,6-bisphosphatase class 2/sedoheptulose 1,7-bisphosphatase from Prochlorococcus marinus (strain NATL1A).